Consider the following 326-residue polypeptide: Transposase InsH for insertion sequence element IS5H (326 aa).

It belongs to the transposase 11 family.

In terms of biological role, involved in the transposition of the insertion sequence IS5. The protein is Transposase InsH for insertion sequence element IS5H (insH6) of Escherichia coli (strain K12).